The sequence spans 381 residues: Sulfate/thiosulfate import ATP-binding protein CysA (381 aa).

Positions 3–233 (ILVYEVSKSL…PIDYFVGIFS (231 aa)) constitute an ABC transporter domain. An ATP-binding site is contributed by 35 to 42 (GPSGSGKS).

The protein belongs to the ABC transporter superfamily. Sulfate/tungstate importer (TC 3.A.1.6) family.

It is found in the plastid. Its subcellular location is the chloroplast. The catalysed reaction is sulfate(out) + ATP + H2O = sulfate(in) + ADP + phosphate + H(+). It catalyses the reaction thiosulfate(out) + ATP + H2O = thiosulfate(in) + ADP + phosphate + H(+). Its function is as follows. Part of the ABC transporter complex involved in sulfate/thiosulfate import. Responsible for energy coupling to the transport system. The protein is Sulfate/thiosulfate import ATP-binding protein CysA of Anthoceros angustus (Hornwort).